The primary structure comprises 189 residues: Low affinity inorganic phosphate transporter 2 (189 aa).

The Cytoplasmic segment spans residues 1-55; that stretch reads TARYTALVAKDAKRAAADMGKVLHVEIDPEDAKVERMAKDESNQFGLFSWEFVRR. Residues 56 to 76 form a helical membrane-spanning segment; it reads HGLHLFGTCSTWFLLDIAFYS. At 77–111 the chain is on the extracellular side; it reads QNLFQKDVFTAIGWIPPAKTMNAVQEVYKIARAQT. Residues 112–132 form a helical membrane-spanning segment; it reads LIALCSTVPGYWFTVAFIDII. Residues 133–134 lie on the Cytoplasmic side of the membrane; sequence GR. A helical membrane pass occupies residues 135 to 155; it reads FAIQLMGFFFMTVFMFAIAIP. Topologically, residues 156–165 are extracellular; sequence YHHWTLQENR. A helical transmembrane segment spans residues 166–186; sequence IGFVIMYSLTFFFANFGPNAT. Topologically, residues 187–189 are cytoplasmic; it reads TFV.

Belongs to the major facilitator superfamily. Phosphate:H(+) symporter (TC 2.A.1.9) family.

The protein resides in the cell membrane. The enzyme catalyses phosphate(in) + H(+)(in) = phosphate(out) + H(+)(out). In terms of biological role, low-affinity transporter for external inorganic phosphate (Pi). The sequence is that of Low affinity inorganic phosphate transporter 2 from Petunia hybrida (Petunia).